We begin with the raw amino-acid sequence, 207 residues long: Ribosome maturation factor RimM (207 aa).

The PRC barrel domain occupies 130–207; it reads EDEFYWVDLI…RIVVDWGLDY (78 aa).

It belongs to the RimM family. Binds ribosomal protein uS19.

The protein resides in the cytoplasm. Functionally, an accessory protein needed during the final step in the assembly of 30S ribosomal subunit, possibly for assembly of the head region. Essential for efficient processing of 16S rRNA. May be needed both before and after RbfA during the maturation of 16S rRNA. It has affinity for free ribosomal 30S subunits but not for 70S ribosomes. In Cupriavidus taiwanensis (strain DSM 17343 / BCRC 17206 / CCUG 44338 / CIP 107171 / LMG 19424 / R1) (Ralstonia taiwanensis (strain LMG 19424)), this protein is Ribosome maturation factor RimM.